Reading from the N-terminus, the 541-residue chain is MATPTSVASSASRDMVQRIHRVTRENRHLWYQLTVLQQPERARACGSGMKANSDRRPVDPPPVVELRIIEGPSVEEGKDITFDYNANFFLYASLEQARPIAHGRVQNGATNNPPILTGVPASGMAYLDRPTEAGYFIFPDLSVRHEGYFRLSFSLYETTKESKDFDMEPADSDLPAGVDWRMEIKTQPFNVFSAKKFPGLMESTSLSKTVADQGCRVRIRRDVRMRKRDGKGSGYDRREEEYARRRTVTPAPAEDPMRARSTSNASEHRAPYMPQDSQRRPSAAESYHAPSLPHAPSLPHAPPPPAYDAPPPAARPGHLQFGGEQNMPQYGGPAPPRSYAHPQGAPIPPVTPTGPYPTASAPSPYPKHDSQPYSYGPRPPVSSASPAPPMKHAGYDSRPSEPYAPQSPSGYTPTERRPSFVSYPSPAPMTPYIAPPAPSPARHMPTQSSLAPLKIASLVSPLPPIEAQTEPLPPPPLLPTGGKRKHDYVFSQNTKPLHNGQRQLDAHFGHGYRGLTPEPDQGLYSRADGQIGVVTFNQYQV.

One can recognise a Velvet domain in the interval 26 to 220 (NRHLWYQLTV…ADQGCRVRIR (195 aa)). A Nuclear localization signal motif is present at residues 40 to 45 (ERARAC). Disordered stretches follow at residues 222-447 (DVRM…MPTQ) and 464-483 (PIEAQTEPLPPPPLLPTGGK). Over residues 230–244 (GKGSGYDRREEEYAR) the composition is skewed to basic and acidic residues. The segment covering 289-298 (APSLPHAPSL) has biased composition (low complexity). Composition is skewed to pro residues over residues 299 to 314 (PHAPPPPAYDAPPPAA), 345 to 355 (APIPPVTPTGP), and 425 to 439 (SPAPMTPYIAPPAPS). The interval 444–472 (MPTQSSLAPLKIASLVSPLPPIEAQTEPL) is PEST.

This sequence belongs to the velvet family. VeA subfamily. In terms of assembly, component of the heterotrimeric velvet complex composed of LAE1, VEL1 and VEL2; VEL1 acting as a bridging protein between LAE1 and VEL2.

It is found in the nucleus. The protein resides in the cytoplasm. In terms of biological role, component of the velvet transcription factor complex that controls sexual/asexual developmental ratio in response to light, promoting sexual development in the darkness while stimulating asexual sporulation under illumination. The velvet complex acts as a global regulator for secondary metabolite gene expression. Controls the expression of the gliotoxin gene cluster. Plays a key role in mycoparasitism. The protein is Developmental and secondary metabolism regulator VEL1 of Hypocrea virens (strain Gv29-8 / FGSC 10586) (Gliocladium virens).